Consider the following 515-residue polypeptide: Folate synthesis bifunctional protein, mitochondrial (515 aa).

Residues M1–S28 constitute a mitochondrion transit peptide. Residues V47–L172 form an HPPK region. A Pterin-binding domain is found at T230–K498. The tract at residues V232–Q515 is DHPS. N237 is a Mg(2+) binding site. (7,8-dihydropterin-6-yl)methyl diphosphate-binding positions include T277, D314, N333, D406, K451, and R486–H488.

It in the N-terminal section; belongs to the HPPK family. This sequence in the C-terminal section; belongs to the DHPS family. Homomultimer. The cofactor is Mg(2+).

The protein resides in the mitochondrion. It carries out the reaction 6-hydroxymethyl-7,8-dihydropterin + ATP = (7,8-dihydropterin-6-yl)methyl diphosphate + AMP + H(+). The catalysed reaction is (7,8-dihydropterin-6-yl)methyl diphosphate + 4-aminobenzoate = 7,8-dihydropteroate + diphosphate. Its pathway is cofactor biosynthesis; tetrahydrofolate biosynthesis; 2-amino-4-hydroxy-6-hydroxymethyl-7,8-dihydropteridine diphosphate from 7,8-dihydroneopterin triphosphate: step 4/4. It functions in the pathway cofactor biosynthesis; tetrahydrofolate biosynthesis; 7,8-dihydrofolate from 2-amino-4-hydroxy-6-hydroxymethyl-7,8-dihydropteridine diphosphate and 4-aminobenzoate: step 1/2. Its function is as follows. Catalyzes the first two consecutive steps of tetrahydrofolate biosynthesis. The sequence is that of Folate synthesis bifunctional protein, mitochondrial from Pisum sativum (Garden pea).